We begin with the raw amino-acid sequence, 279 residues long: 4-diphosphocytidyl-2-C-methyl-D-erythritol kinase (279 aa).

Lys-11 is a catalytic residue. Residue 95–105 coordinates ATP; the sequence is PVAAGLGGGSS. Residue Asp-137 is part of the active site.

The protein belongs to the GHMP kinase family. IspE subfamily.

The enzyme catalyses 4-CDP-2-C-methyl-D-erythritol + ATP = 4-CDP-2-C-methyl-D-erythritol 2-phosphate + ADP + H(+). It participates in isoprenoid biosynthesis; isopentenyl diphosphate biosynthesis via DXP pathway; isopentenyl diphosphate from 1-deoxy-D-xylulose 5-phosphate: step 3/6. Functionally, catalyzes the phosphorylation of the position 2 hydroxy group of 4-diphosphocytidyl-2C-methyl-D-erythritol. The sequence is that of 4-diphosphocytidyl-2-C-methyl-D-erythritol kinase from Geobacter sulfurreducens (strain ATCC 51573 / DSM 12127 / PCA).